Consider the following 56-residue polypeptide: Ovomucoid (56 aa).

One can recognise a Kazal-like domain in the interval 6–56 (VDCSEYPKPACTLEHRPLCGSDNKTYGNKCNFCNAVVESNGTLTLSHFGKC). 3 disulfide bridges follow: Cys-8–Cys-38, Cys-16–Cys-35, and Cys-24–Cys-56. Asn-45 is a glycosylation site (N-linked (GlcNAc...) asparagine).

It localises to the secreted. The chain is Ovomucoid from Pavo cristatus (Indian peafowl).